A 126-amino-acid polypeptide reads, in one-letter code: MNEKARLLRIRAKLKRKKPRFLRQEWWRYPKFKNDPKWRRPKGIDSKMRLKKKGKPRSPSIGWSSPKAVRGLHPSGYEEVLVHNVKELEAIDPTRQAARIAGTVGARKREMILARAKELGVKVLNP.

This sequence belongs to the eukaryotic ribosomal protein eL32 family. In terms of assembly, part of the 50S ribosomal subunit.

The protein is Large ribosomal subunit protein eL32 (rpl32e) of Thermococcus kodakarensis (strain ATCC BAA-918 / JCM 12380 / KOD1) (Pyrococcus kodakaraensis (strain KOD1)).